We begin with the raw amino-acid sequence, 351 residues long: uncharacterized protein (351 aa).

The signal sequence occupies residues 1-27 (MKNKKRVLIASSLSCAILLLSAATTQA). A disordered region spans residues 28-71 (NSAHKDSQDQNKKEHVDKSQQKDKRNVTNKDKNSTVPDDIGKNG). Basic and acidic residues predominate over residues 30–60 (AHKDSQDQNKKEHVDKSQQKDKRNVTNKDKN).

This sequence belongs to the aerolysin family.

This is an uncharacterized protein from Staphylococcus aureus (strain N315).